A 190-amino-acid chain; its full sequence is Protein LZIC (190 aa).

Residues 6-64 (KSETSKLRQNMEEQLDRLMQQLQDLEECREDLEEEEYEETKKETLEQLSEFNDSLKKLM) adopt a coiled-coil conformation.

The protein belongs to the CTNNBIP1 family. Does not interact with CTNNB1.

Functionally, required for neuronal survival during early development. The protein is Protein LZIC (lzic) of Danio rerio (Zebrafish).